Consider the following 218-residue polypeptide: Dual specificity protein phosphatase TpbA (218 aa).

The N-terminal stretch at 1-28 is a signal peptide; the sequence is MHRSPLAWLRLLLAAVLGAFLLGGPLHA. Positions 44-188 constitute a Tyrosine-protein phosphatase domain; sequence DPSINLYRMS…YVRGADVDGL (145 aa). Asp-105 (proton donor/acceptor) is an active-site residue. Cys-132 serves as the catalytic Phosphocysteine intermediate.

Belongs to the protein-tyrosine phosphatase family.

It is found in the periplasm. The enzyme catalyses O-phospho-L-tyrosyl-[protein] + H2O = L-tyrosyl-[protein] + phosphate. It carries out the reaction O-phospho-L-threonyl-[protein] + H2O = L-threonyl-[protein] + phosphate. The catalysed reaction is O-phospho-L-seryl-[protein] + H2O = L-seryl-[protein] + phosphate. Phosphatase that regulates diverse phenotypes in P.aeruginosa via regulation of the concentration of cellular c-di-GMP. Acts by dephosphorylating the membrane-anchored diguanylate cyclase TpbB at tyrosine and serine/threonine sites, leading to inactivation of TpbB and reduced c-di-GMP production. In vitro shows phosphatase activity toward p-nitrophenyl phosphate (pNPP) and tyrosine phosphopeptides. Can efficiently dephosphorylate two phosphorylated peptides derived from the periplasmic domain of TpbB, with a strong preference for Tyr-48 over Tyr-62. This chain is Dual specificity protein phosphatase TpbA, found in Pseudomonas aeruginosa (strain ATCC 15692 / DSM 22644 / CIP 104116 / JCM 14847 / LMG 12228 / 1C / PRS 101 / PAO1).